The chain runs to 492 residues: 2-succinylbenzoate--CoA ligase (492 aa).

Belongs to the ATP-dependent AMP-binding enzyme family. MenE subfamily.

The enzyme catalyses 2-succinylbenzoate + ATP + CoA = 2-succinylbenzoyl-CoA + AMP + diphosphate. The protein operates within quinol/quinone metabolism; 1,4-dihydroxy-2-naphthoate biosynthesis; 1,4-dihydroxy-2-naphthoate from chorismate: step 5/7. Its pathway is quinol/quinone metabolism; menaquinone biosynthesis. Converts 2-succinylbenzoate (OSB) to 2-succinylbenzoyl-CoA (OSB-CoA). The polypeptide is 2-succinylbenzoate--CoA ligase (Staphylococcus aureus (strain MSSA476)).